The sequence spans 176 residues: Peptide deformylase (176 aa).

The Fe cation site is built by Cys-94 and His-136. Residue Glu-137 is part of the active site. Residue His-140 participates in Fe cation binding.

It belongs to the polypeptide deformylase family. Requires Fe(2+) as cofactor.

The enzyme catalyses N-terminal N-formyl-L-methionyl-[peptide] + H2O = N-terminal L-methionyl-[peptide] + formate. Removes the formyl group from the N-terminal Met of newly synthesized proteins. Requires at least a dipeptide for an efficient rate of reaction. N-terminal L-methionine is a prerequisite for activity but the enzyme has broad specificity at other positions. In Bartonella henselae (strain ATCC 49882 / DSM 28221 / CCUG 30454 / Houston 1) (Rochalimaea henselae), this protein is Peptide deformylase.